Consider the following 494-residue polypeptide: Alpha-amylase 2 (494 aa).

Positions 1–18 are cleaved as a signal peptide; sequence MFLAKSIVCLALLAVANA. Cysteine 46 and cysteine 102 are oxidised to a cystine. Ca(2+)-binding residues include asparagine 116, arginine 165, and aspartate 174. Cysteines 153 and 167 form a disulfide. Arginine 202 provides a ligand contact to chloride. Aspartate 204 functions as the Nucleophile in the catalytic mechanism. Histidine 208 contributes to the Ca(2+) binding site. Residue glutamate 241 is the Proton donor of the active site. Residues asparagine 304 and arginine 343 each coordinate chloride. A disordered region spans residues 350-370; it reads FTDTDQGPPTTDGQNIASPSF. Positions 351–363 are enriched in low complexity; it reads TDTDQGPPTTDGQ. Cystine bridges form between cysteine 376–cysteine 382 and cysteine 448–cysteine 460.

Belongs to the glycosyl hydrolase 13 family. As to quaternary structure, monomer. Requires Ca(2+) as cofactor. It depends on chloride as a cofactor.

It catalyses the reaction Endohydrolysis of (1-&gt;4)-alpha-D-glucosidic linkages in polysaccharides containing three or more (1-&gt;4)-alpha-linked D-glucose units.. This Drosophila ananassae (Fruit fly) protein is Alpha-amylase 2 (Amy58).